The following is an 845-amino-acid chain: Protein arginine N-methyltransferase 9 (845 aa).

TPR repeat units follow at residues 25 to 58 (VSRSLQSAEHCLGVQDFGTAYAHYLLVLSLAPEL), 67 to 100 (QYTLFRWAEELDALSRIQDLLGCYEQALELFPDD), and 101 to 134 (EVICNSMGEHLFRMGFRDEAAGYFHKAVKLNPDF). SAM-dependent MTase PRMT-type domains follow at residues 137 to 466 (AKEN…YLRI) and 530 to 845 (NIPY…TVKQ).

It belongs to the class I-like SAM-binding methyltransferase superfamily. Protein arginine N-methyltransferase family. As to quaternary structure, found in a complex with PRMT9, SF3B2 and SF3B4. Interacts with SF3B2.

Its subcellular location is the cytoplasm. The enzyme catalyses L-arginyl-[protein] + 2 S-adenosyl-L-methionine = N(omega),N(omega)'-dimethyl-L-arginyl-[protein] + 2 S-adenosyl-L-homocysteine + 2 H(+). Its function is as follows. Arginine methyltransferase that can both catalyze the formation of omega-N monomethylarginine (MMA) and symmetrical dimethylarginine (sDMA). Specifically mediates the symmetrical dimethylation of SF3B2. Involved in the regulation of alternative splicing of pre-mRNA. This Homo sapiens (Human) protein is Protein arginine N-methyltransferase 9.